Reading from the N-terminus, the 301-residue chain is Protoheme IX farnesyltransferase (301 aa).

Transmembrane regions (helical) follow at residues 20–42 (FTELVKIGIVNSNTITAFTGMWL), 55–75 (VDVIFFTIVGSALIVAASGAF), 105–125 (ALMVALVLGVVGTIMLFMTTW), 126–146 (QAGVLGVIGVFLYVVVYSLYA), 150–172 (LVSNTVIGSFSGAVPPLIGWFAV), 176–198 (FSIVPIMLFLVMFCWQPPHFYAI), 227–247 (MFFWVILLTVLPFFMFDLGLV), 249–269 (VILATLLNIGWLALSIYGFKM), and 280–300 (FVYSLNYMTILFVAMVVISIF).

This sequence belongs to the UbiA prenyltransferase family. Protoheme IX farnesyltransferase subfamily. In terms of assembly, interacts with CtaA.

It is found in the cell membrane. The catalysed reaction is heme b + (2E,6E)-farnesyl diphosphate + H2O = Fe(II)-heme o + diphosphate. It participates in porphyrin-containing compound metabolism; heme O biosynthesis; heme O from protoheme: step 1/1. Functionally, converts heme B (protoheme IX) to heme O by substitution of the vinyl group on carbon 2 of heme B porphyrin ring with a hydroxyethyl farnesyl side group. The sequence is that of Protoheme IX farnesyltransferase from Listeria innocua serovar 6a (strain ATCC BAA-680 / CLIP 11262).